The chain runs to 106 residues: Putative double-stranded DNA mimic protein VP1949 (106 aa).

The protein belongs to the putative dsDNA mimic protein family.

May act as a double-stranded DNA (dsDNA) mimic. Probably regulates the activity of a dsDNA-binding protein. This chain is Putative double-stranded DNA mimic protein VP1949, found in Vibrio parahaemolyticus serotype O3:K6 (strain RIMD 2210633).